Here is a 273-residue protein sequence, read N- to C-terminus: Light-independent protochlorophyllide reductase iron-sulfur ATP-binding protein (273 aa).

Residues 12–17 (GIGKST) and Lys-41 each bind ATP. Ser-16 contacts Mg(2+). [4Fe-4S] cluster is bound by residues Cys-97 and Cys-131. 182 to 183 (NR) provides a ligand contact to ATP.

The protein belongs to the NifH/BchL/ChlL family. Homodimer. Protochlorophyllide reductase is composed of three subunits; BchL, BchN and BchB. [4Fe-4S] cluster serves as cofactor.

The catalysed reaction is chlorophyllide a + oxidized 2[4Fe-4S]-[ferredoxin] + 2 ADP + 2 phosphate = protochlorophyllide a + reduced 2[4Fe-4S]-[ferredoxin] + 2 ATP + 2 H2O. The protein operates within porphyrin-containing compound metabolism; bacteriochlorophyll biosynthesis (light-independent). Its function is as follows. Component of the dark-operative protochlorophyllide reductase (DPOR) that uses Mg-ATP and reduced ferredoxin to reduce ring D of protochlorophyllide (Pchlide) to form chlorophyllide a (Chlide). This reaction is light-independent. The L component serves as a unique electron donor to the NB-component of the complex, and binds Mg-ATP. The protein is Light-independent protochlorophyllide reductase iron-sulfur ATP-binding protein of Roseiflexus sp. (strain RS-1).